The primary structure comprises 69 residues: DNA-directed RNA polymerase subunit epsilon (69 aa).

The protein belongs to the RNA polymerase subunit epsilon family. In terms of assembly, RNAP is composed of a core of 2 alpha, a beta and a beta' subunit. The core is associated with a delta subunit, and at least one of epsilon or omega. When a sigma factor is associated with the core the holoenzyme is formed, which can initiate transcription.

The catalysed reaction is RNA(n) + a ribonucleoside 5'-triphosphate = RNA(n+1) + diphosphate. A non-essential component of RNA polymerase (RNAP). The sequence is that of DNA-directed RNA polymerase subunit epsilon from Halalkalibacterium halodurans (strain ATCC BAA-125 / DSM 18197 / FERM 7344 / JCM 9153 / C-125) (Bacillus halodurans).